The sequence spans 194 residues: Histone H1.0-A (194 aa).

Disordered regions lie at residues 1–29 (MTENSAPAAKPRRSKASKKSTDHPKYSDM) and 96–194 (ADEV…GRKK). One can recognise an H15 domain in the interval 22 to 95 (DHPKYSDMIL…GASGSFRLAK (74 aa)). Basic residues-rich tracts occupy residues 102 to 164 (PAKK…KTVR) and 172 to 194 (KAKKAKPSKPKAKASPKKSGRKK).

Belongs to the histone H1/H5 family.

The protein localises to the nucleus. The protein resides in the chromosome. In terms of biological role, histones H1 are necessary for the condensation of nucleosome chains into higher-order structures. The histones H1.0 are found in cells that are in terminal stages of differentiation or that have low rates of cell division. The protein is Histone H1.0-A (h1-0-a) of Xenopus laevis (African clawed frog).